Reading from the N-terminus, the 690-residue chain is Guanylate cyclase soluble subunit alpha-1 (690 aa).

S267 carries the phosphoserine modification. The region spanning 481 to 608 (TMLFSDIVGF…NNVTLANKFE (128 aa)) is the Guanylate cyclase domain.

It belongs to the adenylyl cyclase class-4/guanylyl cyclase family. As to quaternary structure, the active enzyme is formed by a heterodimer of an alpha and a beta subunit. Heterodimer with GUCY1B1. The cofactor is Mg(2+). Mn(2+) serves as cofactor.

The protein localises to the cytoplasm. The enzyme catalyses GTP = 3',5'-cyclic GMP + diphosphate. With respect to regulation, activated by nitric oxide in the presence of magnesium or manganese ions. The protein is Guanylate cyclase soluble subunit alpha-1 (GUCY1A1) of Canis lupus familiaris (Dog).